The sequence spans 33 residues: Beta-amanitin proprotein (33 aa).

The propeptide occupies 1–10 (MSDINATRLP). Positions 11–18 (IWGIGCDP) form a cross-link, cyclopeptide (Ile-Pro). A cross-link (2'-cysteinyl-6'-hydroxytryptophan sulfoxide (Trp-Cys)) is located at residues 12 to 16 (WGIGC). Residues 19-33 (CVGDDVTAVLTRGEA) constitute a propeptide that is removed on maturation.

Belongs to the MSDIN fungal toxin family. Processed by the macrocyclase-peptidase enzyme POPB to yield a toxic cyclic decapeptide. POPB first removes 10 residues from the N-terminus. Conformational trapping of the remaining peptide forces the enzyme to release this intermediate rather than proceed to macrocyclization. The enzyme rebinds the remaining peptide in a different conformation and catalyzes macrocyclization of the N-terminal 8 residues.

Functionally, toxin belonging to the bicyclic octapeptides amatoxins that acts by binding non-competitively to RNA polymerase II and greatly slowing the elongation of transcripts from target promoters. This is Beta-amanitin proprotein from Amanita pallidorosea.